Consider the following 66-residue polypeptide: Large ribosomal subunit protein uL29 (66 aa).

This sequence belongs to the universal ribosomal protein uL29 family.

The polypeptide is Large ribosomal subunit protein uL29 (Fervidobacterium nodosum (strain ATCC 35602 / DSM 5306 / Rt17-B1)).